The sequence spans 595 residues: Chaperone protein HscA homolog (595 aa).

The protein belongs to the heat shock protein 70 family.

Functionally, chaperone involved in the maturation of iron-sulfur cluster-containing proteins. Has a low intrinsic ATPase activity which is markedly stimulated by HscB. The chain is Chaperone protein HscA homolog from Rickettsia rickettsii (strain Iowa).